The chain runs to 156 residues: ATP synthase subunit b (156 aa).

The chain crosses the membrane as a helical span at residues 7-27 (LIGQTVAFIIFVWFCMKFVWP).

The protein belongs to the ATPase B chain family. As to quaternary structure, F-type ATPases have 2 components, F(1) - the catalytic core - and F(0) - the membrane proton channel. F(1) has five subunits: alpha(3), beta(3), gamma(1), delta(1), epsilon(1). F(0) has three main subunits: a(1), b(2) and c(10-14). The alpha and beta chains form an alternating ring which encloses part of the gamma chain. F(1) is attached to F(0) by a central stalk formed by the gamma and epsilon chains, while a peripheral stalk is formed by the delta and b chains.

Its subcellular location is the cell inner membrane. Functionally, f(1)F(0) ATP synthase produces ATP from ADP in the presence of a proton or sodium gradient. F-type ATPases consist of two structural domains, F(1) containing the extramembraneous catalytic core and F(0) containing the membrane proton channel, linked together by a central stalk and a peripheral stalk. During catalysis, ATP synthesis in the catalytic domain of F(1) is coupled via a rotary mechanism of the central stalk subunits to proton translocation. Its function is as follows. Component of the F(0) channel, it forms part of the peripheral stalk, linking F(1) to F(0). This chain is ATP synthase subunit b, found in Shewanella oneidensis (strain ATCC 700550 / JCM 31522 / CIP 106686 / LMG 19005 / NCIMB 14063 / MR-1).